Reading from the N-terminus, the 673-residue chain is Ion-translocating oxidoreductase complex subunit C (673 aa).

2 4Fe-4S ferredoxin-type domains span residues 368–397 and 407–436; these read MGAP…QQLY and KATA…VQYF. [4Fe-4S] cluster-binding residues include Cys377, Cys380, Cys383, Cys387, Cys416, Cys419, Cys422, and Cys426. Disordered regions lie at residues 534-553 and 563-653; these read QARA…SGGA and IARA…AAVA.

Belongs to the 4Fe4S bacterial-type ferredoxin family. RnfC subfamily. In terms of assembly, the complex is composed of six subunits: RsxA, RsxB, RsxC, RsxD, RsxE and RsxG. [4Fe-4S] cluster is required as a cofactor.

It localises to the cell inner membrane. Its function is as follows. Part of a membrane-bound complex that couples electron transfer with translocation of ions across the membrane. Required to maintain the reduced state of SoxR. The chain is Ion-translocating oxidoreductase complex subunit C from Salmonella gallinarum (strain 287/91 / NCTC 13346).